Consider the following 142-residue polypeptide: Large ribosomal subunit protein bL17 (142 aa).

The protein belongs to the bacterial ribosomal protein bL17 family. Part of the 50S ribosomal subunit. Contacts protein L32.

This chain is Large ribosomal subunit protein bL17, found in Methylocella silvestris (strain DSM 15510 / CIP 108128 / LMG 27833 / NCIMB 13906 / BL2).